Consider the following 426-residue polypeptide: Serine--tRNA ligase (426 aa).

A disordered region spans residues 36 to 66; it reads KRKHLQERTQDLQSQRNTISKEIGQKKAKGE. Over residues 46–55 the composition is skewed to polar residues; it reads DLQSQRNTIS. Residue 233 to 235 coordinates L-serine; that stretch reads TAE. 264–266 serves as a coordination point for ATP; the sequence is RSE. E287 contacts L-serine. Residue 351 to 354 coordinates ATP; it reads EISS. Position 387 (S387) interacts with L-serine.

This sequence belongs to the class-II aminoacyl-tRNA synthetase family. Type-1 seryl-tRNA synthetase subfamily. Homodimer. The tRNA molecule binds across the dimer.

Its subcellular location is the cytoplasm. The enzyme catalyses tRNA(Ser) + L-serine + ATP = L-seryl-tRNA(Ser) + AMP + diphosphate + H(+). The catalysed reaction is tRNA(Sec) + L-serine + ATP = L-seryl-tRNA(Sec) + AMP + diphosphate + H(+). Its pathway is aminoacyl-tRNA biosynthesis; selenocysteinyl-tRNA(Sec) biosynthesis; L-seryl-tRNA(Sec) from L-serine and tRNA(Sec): step 1/1. Catalyzes the attachment of serine to tRNA(Ser). Is also able to aminoacylate tRNA(Sec) with serine, to form the misacylated tRNA L-seryl-tRNA(Sec), which will be further converted into selenocysteinyl-tRNA(Sec). The polypeptide is Serine--tRNA ligase (Francisella tularensis subsp. holarctica (strain FTNF002-00 / FTA)).